The primary structure comprises 88 residues: Molybdopterin synthase sulfur carrier subunit (88 aa).

The residue at position 88 (Gly-88) is a 1-thioglycine; alternate. Position 88 is a glycyl adenylate; alternate (Gly-88).

This sequence belongs to the MoaD family. MOCS2A subfamily. As to quaternary structure, heterotetramer; composed of 2 small (MOCS2A) and 2 large (MOCS2B) subunits. Post-translationally, C-terminal thiocarboxylation occurs in 2 steps, it is first acyl-adenylated (-COAMP) via the hesA/moeB/thiF part of uba4, then thiocarboxylated (-COSH) via the rhodanese domain of uba4.

It localises to the cytoplasm. It participates in cofactor biosynthesis; molybdopterin biosynthesis. In terms of biological role, acts as a sulfur carrier required for molybdopterin biosynthesis. Component of the molybdopterin synthase complex that catalyzes the conversion of precursor Z into molybdopterin by mediating the incorporation of 2 sulfur atoms into precursor Z to generate a dithiolene group. In the complex, serves as sulfur donor by being thiocarboxylated (-COSH) at its C-terminus by uba4. After interaction with MOCS2B, the sulfur is then transferred to precursor Z to form molybdopterin. In Aspergillus niger (strain ATCC MYA-4892 / CBS 513.88 / FGSC A1513), this protein is Molybdopterin synthase sulfur carrier subunit.